The chain runs to 165 residues: Transcription factor TCP16 (165 aa).

Residues 1–11 (MDSKNGINNSQ) are compositionally biased toward polar residues. Disordered stretches follow at residues 1–21 (MDSK…KDRH) and 146–165 (GNAT…TTTV). The segment covering 12-21 (KARRTPKDRH) has biased composition (basic residues). Positions 17–71 (PKDRHLKIGGRDRRIRIPPSVAPQLFRLTKELGFKTDGETVSWLLQNAEPAIFAA) constitute a TCP domain. Residues 148–165 (ATASDTTSAATTTATTTV) show a composition bias toward low complexity.

In terms of tissue distribution, mostly in anther in young buds.

It is found in the nucleus. Its function is as follows. Required during early processes in pollen development. The polypeptide is Transcription factor TCP16 (TCP16) (Arabidopsis thaliana (Mouse-ear cress)).